We begin with the raw amino-acid sequence, 328 residues long: B3 domain-containing protein At5g60140 (328 aa).

The segment at residues 13 to 109 (SKFFKPYLPS…FFNFSIFDHE (97 aa)) is a DNA-binding region (TF-B3). Positions 145–221 (LNSDDSDDSD…EDEDDLEDED (77 aa)) are disordered. 2 stretches are compositionally biased toward acidic residues: residues 148-182 (DDSDDSDNDYSVEDDNVAEDDDGLEDEVDVEAEDG) and 190-221 (GLEDEDDDEAEDGYDAKDDDGLEDEDDLEDED).

Its subcellular location is the nucleus. The polypeptide is B3 domain-containing protein At5g60140 (Arabidopsis thaliana (Mouse-ear cress)).